The following is a 1218-amino-acid chain: Protein jagged-1 (1218 aa).

The first 33 residues, 1–33 (MRSPRTRGRPGRPLSLLLALLCALRAKVCGASG), serve as a signal peptide directing secretion. At 34-1067 (QFELEILSMQ…QRRPLKNRTD (1034 aa)) the chain is on the extracellular side. Asparagine 143 carries an N-linked (GlcNAc...) asparagine glycan. The DSL domain occupies 185–229 (VTCDDHYYGFGCNKFCRPRDDFFGHYACDQNGNKTCMEGWMGPDC). Intrachain disulfides connect cysteine 187–cysteine 196 and cysteine 200–cysteine 212. The interval 199 to 207 (FCRPRDDFF) is important for interaction with NOTCH1. Asparagine 217 is a glycosylation site (N-linked (GlcNAc...) asparagine). 40 cysteine pairs are disulfide-bonded: cysteine 220–cysteine 229, cysteine 234–cysteine 245, cysteine 238–cysteine 251, cysteine 253–cysteine 262, cysteine 265–cysteine 276, cysteine 271–cysteine 282, cysteine 284–cysteine 293, cysteine 300–cysteine 312, cysteine 306–cysteine 322, cysteine 324–cysteine 333, cysteine 340–cysteine 351, cysteine 345–cysteine 360, cysteine 362–cysteine 371, cysteine 378–cysteine 389, cysteine 383–cysteine 398, cysteine 400–cysteine 409, cysteine 416–cysteine 427, cysteine 421–cysteine 436, cysteine 438–cysteine 447, cysteine 454–cysteine 464, cysteine 458–cysteine 473, cysteine 475–cysteine 484, cysteine 491–cysteine 502, cysteine 496–cysteine 511, cysteine 513–cysteine 522, cysteine 529–cysteine 540, cysteine 534–cysteine 549, cysteine 551–cysteine 560, cysteine 578–cysteine 605, cysteine 599–cysteine 615, cysteine 617–cysteine 626, cysteine 633–cysteine 644, cysteine 638–cysteine 653, cysteine 655–cysteine 664, cysteine 671–cysteine 682, cysteine 676–cysteine 691, cysteine 693–cysteine 702, cysteine 709–cysteine 720, cysteine 714–cysteine 729, and cysteine 731–cysteine 740. Residues 230–263 (NKAICRQGCSPKHGSCKLPGDCRCQYGWQGLYCD) form the EGF-like 1 domain. Residues 264 to 294 (KCIPHPGCVHGTCNEPWQCLCETNWGGQLCD) form the EGF-like 2; atypical domain. 2 consecutive EGF-like domains span residues 296–334 (DLNYCGTHQPCLNRGTCSNTGPDKYQCSCPEGYSGPNCE) and 336–372 (AEHACLSDPCHNRGSCKETSSGFECECSPGWTGPTCS). The EGF-like 5; calcium-binding domain occupies 374-410 (NIDDCSPNNCSHGGTCQDLVNGFKCVCPPQWTGKTCQ). Residue asparagine 382 is glycosylated (N-linked (GlcNAc...) asparagine). One can recognise an EGF-like 6; calcium-binding domain in the interval 412–448 (DANECEAKPCVNARSCKNLIASYYCDCLPGWMGQNCD). The EGF-like 7; calcium-binding domain occupies 450–485 (NINDCLGQCQNDASCRDLVNGYRCICPPGYAGDHCE). Positions 487–523 (DIDECASNPCLNGGHCQNEINRFQCLCPTGFSGNLCQ) constitute an EGF-like 8; calcium-binding domain. EGF-like domains are found at residues 525–561 (DIDYCEPNPCQNGAQCYNRASDYFCKCPEDYEGKNCS) and 586–627 (DTPE…TYCH). An N-linked (GlcNAc...) asparagine glycan is attached at asparagine 559. The region spanning 629–665 (NINDCESNPCKNGGTCIDGVNSYKCICSDGWEGAHCE) is the EGF-like 11; calcium-binding domain. The 37-residue stretch at 667-703 (NINDCSQNPCHYGGTCRDLVNDFYCDCKNGWKGKTCH) folds into the EGF-like 12; calcium-binding domain. 2 consecutive EGF-like domains span residues 705–741 (RDSQCDEATCNNGGTCYDEVDTFKCMCPGGWEGTTCN) and 744–780 (RNSSCLPNPCHNGGTCVVNGDSFTCVCKEGWEGPICT). A glycan (N-linked (GlcNAc...) asparagine) is linked at asparagine 745. 9 disulfides stabilise this stretch: cysteine 748–cysteine 759, cysteine 753–cysteine 768, cysteine 770–cysteine 779, cysteine 786–cysteine 797, cysteine 791–cysteine 806, cysteine 808–cysteine 817, cysteine 824–cysteine 835, cysteine 829–cysteine 844, and cysteine 846–cysteine 855. The region spanning 782–818 (NTNDCSPHPCYNSGTCVDGDNWYRCECAPGFAGPDCR) is the EGF-like 15; calcium-binding domain. Positions 820–856 (NINECQSSPCAFGATCVDEINGYQCICPPGHSGAKCH) constitute an EGF-like 16; calcium-binding domain. N-linked (GlcNAc...) asparagine glycans are attached at residues asparagine 960, asparagine 991, asparagine 1045, and asparagine 1064. Residues 1068–1093 (FLVPLLSSVLTVAWVCCLVTAFYWCV) traverse the membrane as a helical segment. Over 1094–1218 (RKRRKPSSHT…QSLNRMEYIV (125 aa)) the chain is Cytoplasmic. Positions 1181-1218 (REEKAPSGTPTKHPNWTNKQDNRDLESAQSLNRMEYIV) are disordered. Polar residues predominate over residues 1188–1199 (GTPTKHPNWTNK).

As to quaternary structure, interacts with NOTCH1, NOTCH2 and NOTCH3. As to expression, widely expressed in many tissues, with highest expression in brain, heart, muscle and thymus.

The protein resides in the membrane. It localises to the cell membrane. In terms of biological role, ligand for multiple Notch receptors and involved in the mediation of Notch signaling. May be involved in cell-fate decisions during hematopoiesis. Seems to be involved in early and late stages of mammalian cardiovascular development. Inhibits myoblast differentiation. May regulate fibroblast growth factor-induced angiogenesis. In Mus musculus (Mouse), this protein is Protein jagged-1 (Jag1).